A 311-amino-acid chain; its full sequence is Chalcone synthase 4 (311 aa).

Residue Cys-164 is part of the active site.

Belongs to the thiolase-like superfamily. Chalcone/stilbene synthases family.

It carries out the reaction (E)-4-coumaroyl-CoA + 3 malonyl-CoA + 3 H(+) = 2',4,4',6'-tetrahydroxychalcone + 3 CO2 + 4 CoA. It functions in the pathway secondary metabolite biosynthesis; flavonoid biosynthesis. The primary product of this enzyme is 4,2',4',6'-tetrahydroxychalcone (also termed naringenin-chalcone or chalcone) which can under specific conditions spontaneously isomerize into naringenin. The protein is Chalcone synthase 4 (CHS4) of Trifolium subterraneum (Subterranean clover).